Consider the following 143-residue polypeptide: Ribosome maturation factor RimP (143 aa).

Belongs to the RimP family.

It is found in the cytoplasm. Required for maturation of 30S ribosomal subunits. The protein is Ribosome maturation factor RimP of Neisseria meningitidis serogroup C (strain 053442).